The primary structure comprises 291 residues: MSAAPVVDAEYMAEVERARRDLRALIASKSCAPIMLRLAWHDAGTYDKATKTGGPNGSIRFPQEYSHAANAGIKIAIDLLEPMKQKHPKITYADLYQLAGVVAVEVTGGPTIDYVPGRRDSSDSPEEGRLPDAKKGAAHLREVFYRMGLSDKDIVALSGGHTLGKARPERSGFDGAWTKDPLKFDNSYFIELLKENSEGLLKLPTDKALVEDPTFRRYVELYAKDEDAFFRDYAESHKKLSELGFTPPRSAFIYKSCQKPKSLLMQTAAGVAVAAAVVAWAYLCESNKRLG.

The active-site Proton acceptor is His41. The interval 114-133 (YVPGRRDSSDSPEEGRLPDA) is disordered. Basic and acidic residues predominate over residues 116-133 (PGRRDSSDSPEEGRLPDA). His161 is a heme b binding site. Thr162, Thr178, and Asp185 together coordinate K(+). The helical transmembrane segment at 263 to 283 (LLMQTAAGVAVAAAVVAWAYL) threads the bilayer.

The protein belongs to the peroxidase family. Ascorbate peroxidase subfamily. Heme b is required as a cofactor. In terms of tissue distribution, expressed in stems.

The protein resides in the peroxisome membrane. The enzyme catalyses L-ascorbate + H2O2 = L-dehydroascorbate + 2 H2O. In terms of biological role, plays a key role in hydrogen peroxide removal. The protein is Probable L-ascorbate peroxidase 3, peroxisomal of Oryza sativa subsp. japonica (Rice).